A 314-amino-acid polypeptide reads, in one-letter code: Methionyl-tRNA formyltransferase (314 aa).

(6S)-5,6,7,8-tetrahydrofolate is bound at residue 112-115 (SLLP).

This sequence belongs to the Fmt family.

The enzyme catalyses L-methionyl-tRNA(fMet) + (6R)-10-formyltetrahydrofolate = N-formyl-L-methionyl-tRNA(fMet) + (6S)-5,6,7,8-tetrahydrofolate + H(+). In terms of biological role, attaches a formyl group to the free amino group of methionyl-tRNA(fMet). The formyl group appears to play a dual role in the initiator identity of N-formylmethionyl-tRNA by promoting its recognition by IF2 and preventing the misappropriation of this tRNA by the elongation apparatus. In Legionella pneumophila (strain Paris), this protein is Methionyl-tRNA formyltransferase.